Reading from the N-terminus, the 211-residue chain is uncharacterized protein (211 aa).

The segment at leucine 187 to aspartate 211 is disordered. Over residues glutamate 201 to aspartate 211 the composition is skewed to basic and acidic residues.

This is an uncharacterized protein from Spiroplasma citri.